Reading from the N-terminus, the 147-residue chain is MKIWVDADACPVLVKQILFKAAQRTQVEMTLVANQHIPVPPDKNITSIQVQSGFDMADDYIVEQCVANDLVITADIPLAAEVIAKGAHALNPRGELYTKESIGSILNIRDFMDTMRSSGVQTGGPGAYGNKEKQAFANNLDRLLAQR.

This sequence belongs to the UPF0178 family.

The polypeptide is UPF0178 protein Patl_1318 (Pseudoalteromonas atlantica (strain T6c / ATCC BAA-1087)).